The following is a 191-amino-acid chain: Thymidine kinase (191 aa).

ATP contacts are provided by residues 15–22 and 88–91; these read GSMFSGKS and DEVQ. The active-site Proton acceptor is glutamate 89. Zn(2+)-binding residues include cysteine 145, cysteine 148, cysteine 183, and histidine 186.

It belongs to the thymidine kinase family. Homotetramer.

It is found in the cytoplasm. The catalysed reaction is thymidine + ATP = dTMP + ADP + H(+). In Macrococcus caseolyticus (strain JCSC5402) (Macrococcoides caseolyticum), this protein is Thymidine kinase.